The chain runs to 152 residues: Ribonuclease H (152 aa).

Residues 6–147 (KKNRVIAYTD…ADELANKAIA (142 aa)) form the RNase H type-1 domain. Mg(2+)-binding residues include D15, E53, D75, and D139.

Belongs to the RNase H family. As to quaternary structure, monomer. Mg(2+) is required as a cofactor.

The protein localises to the cytoplasm. It carries out the reaction Endonucleolytic cleavage to 5'-phosphomonoester.. Its function is as follows. Endonuclease that specifically degrades the RNA of RNA-DNA hybrids. The protein is Ribonuclease H of Francisella tularensis subsp. tularensis (strain FSC 198).